We begin with the raw amino-acid sequence, 320 residues long: Tyrosine recombinase Synpcc7942_B2651 (320 aa).

One can recognise a Core-binding (CB) domain in the interval 16–106 (VQDWDVLQML…ALKSLVRFSR (91 aa)). In terms of domain architecture, Tyr recombinase spans 127–313 (RDTTGTTPER…RQDFQGECTE (187 aa)). Catalysis depends on residues R167, K193, H264, R267, and H291. The O-(3'-phospho-DNA)-tyrosine intermediate role is filled by Y300.

It belongs to the 'phage' integrase family.

Its subcellular location is the cytoplasm. Its function is as follows. Site-specific tyrosine recombinase, which acts by catalyzing the cutting and rejoining of the recombining DNA molecules. This chain is Tyrosine recombinase Synpcc7942_B2651, found in Synechococcus elongatus (strain ATCC 33912 / PCC 7942 / FACHB-805) (Anacystis nidulans R2).